Consider the following 354-residue polypeptide: Uroporphyrinogen decarboxylase (354 aa).

Residues 27–31 (RQAGR), Asp-77, Tyr-153, Thr-208, and His-326 contribute to the substrate site.

It belongs to the uroporphyrinogen decarboxylase family. Homodimer.

It is found in the cytoplasm. The catalysed reaction is uroporphyrinogen III + 4 H(+) = coproporphyrinogen III + 4 CO2. Its pathway is porphyrin-containing compound metabolism; protoporphyrin-IX biosynthesis; coproporphyrinogen-III from 5-aminolevulinate: step 4/4. Its function is as follows. Catalyzes the decarboxylation of four acetate groups of uroporphyrinogen-III to yield coproporphyrinogen-III. This is Uroporphyrinogen decarboxylase from Neisseria meningitidis serogroup C (strain 053442).